The sequence spans 104 residues: L-rhamnose mutarotase (104 aa).

Tyrosine 18 lines the substrate pocket. Residue histidine 22 is the Proton donor of the active site. Residues tyrosine 41 and 76-77 contribute to the substrate site; that span reads WW.

It belongs to the rhamnose mutarotase family. In terms of assembly, homodimer.

It is found in the cytoplasm. The enzyme catalyses alpha-L-rhamnose = beta-L-rhamnose. The protein operates within carbohydrate metabolism; L-rhamnose metabolism. Its function is as follows. Involved in the anomeric conversion of L-rhamnose. The sequence is that of L-rhamnose mutarotase from Pectobacterium carotovorum subsp. carotovorum (strain PC1).